Here is a 246-residue protein sequence, read N- to C-terminus: Ribonuclease PH (246 aa).

Phosphate contacts are provided by residues R91 and 129–131 (GTR).

Belongs to the RNase PH family. As to quaternary structure, homohexameric ring arranged as a trimer of dimers.

It catalyses the reaction tRNA(n+1) + phosphate = tRNA(n) + a ribonucleoside 5'-diphosphate. Its function is as follows. Phosphorolytic 3'-5' exoribonuclease that plays an important role in tRNA 3'-end maturation. Removes nucleotide residues following the 3'-CCA terminus of tRNAs; can also add nucleotides to the ends of RNA molecules by using nucleoside diphosphates as substrates, but this may not be physiologically important. Probably plays a role in initiation of 16S rRNA degradation (leading to ribosome degradation) during starvation. This Burkholderia cenocepacia (strain ATCC BAA-245 / DSM 16553 / LMG 16656 / NCTC 13227 / J2315 / CF5610) (Burkholderia cepacia (strain J2315)) protein is Ribonuclease PH.